We begin with the raw amino-acid sequence, 671 residues long: tRNA(Met) cytidine acetyltransferase TmcA (671 aa).

ATP is bound by residues Q180, 202–211 (GRGKSALAGQ), and R319. An N-acetyltransferase domain is found at 349–531 (IRFSAFTQAL…SGCYTAMALL (183 aa)). Acetyl-CoA is bound by residues 461-463 (IAV), 468-474 (QREGIGQ), E499, and R506.

The protein belongs to the RNA cytidine acetyltransferase family. TmcA subfamily.

Its subcellular location is the cytoplasm. The enzyme catalyses cytidine(34) in elongator tRNA(Met) + acetyl-CoA + ATP + H2O = N(4)-acetylcytidine(34) in elongator tRNA(Met) + ADP + phosphate + CoA + H(+). Functionally, catalyzes the formation of N(4)-acetylcytidine (ac(4)C) at the wobble position of tRNA(Met), by using acetyl-CoA as an acetyl donor and ATP (or GTP). The chain is tRNA(Met) cytidine acetyltransferase TmcA from Citrobacter koseri (strain ATCC BAA-895 / CDC 4225-83 / SGSC4696).